The primary structure comprises 123 residues: MTGDTEKEQEPSSGEQQLNVLKRIHEILTKHSSTQTEFIPLLYHSLKQISKHPNNSSNSLDAATSSIRHRLKTAKTLLQQDPAAIELVSKTPEQWQLHIQEKKIELEKKTKHLQRLRESIQKQ.

Residues 95–123 (WQLHIQEKKIELEKKTKHLQRLRESIQKQ) adopt a coiled-coil conformation.

Belongs to the Mediator complex subunit 9 family. As to quaternary structure, component of the Mediator complex.

Its subcellular location is the nucleus. Functionally, component of the Mediator complex, a coactivator involved in the regulated transcription of nearly all RNA polymerase II-dependent genes. Mediator functions as a bridge to convey information from gene-specific regulatory proteins to the basal RNA polymerase II transcription machinery. Mediator is recruited to promoters by direct interactions with regulatory proteins and serves as a scaffold for the assembly of a functional preinitiation complex with RNA polymerase II and the general transcription factors. This Kluyveromyces lactis (strain ATCC 8585 / CBS 2359 / DSM 70799 / NBRC 1267 / NRRL Y-1140 / WM37) (Yeast) protein is Mediator of RNA polymerase II transcription subunit 9 (CSE2).